The chain runs to 426 residues: Histone deacetylase 9 (426 aa).

Residues lysine 6–aspartate 318 are histone deacetylase. Histidine 137 acts as the Proton donor/acceptor in catalysis. Aspartate 172, histidine 174, and aspartate 261 together coordinate Zn(2+). Residues proline 383–serine 426 form a disordered region. Over residues proline 397–aspartate 414 the composition is skewed to basic and acidic residues. Residues glutamate 415 to serine 426 are compositionally biased toward acidic residues.

It belongs to the histone deacetylase family. HD type 1 subfamily. In terms of assembly, interacts with AHL22. Binds to farnesylated ASG2 in the cytosol. Requires Zn(2+) as cofactor.

The protein resides in the nucleus. It is found in the cytoplasm. Its subcellular location is the cytosol. The enzyme catalyses N(6)-acetyl-L-lysyl-[histone] + H2O = L-lysyl-[histone] + acetate. Responsible for the deacetylation of lysine residues on the N-terminal part of the core histones (H2A, H2B, H3 and H4). Histone deacetylation gives a tag for epigenetic repression and plays an important role in transcriptional regulation, cell cycle progression and developmental events. Histone deacetylases act via the formation of large multiprotein complexes. The polypeptide is Histone deacetylase 9 (HDA9) (Arabidopsis thaliana (Mouse-ear cress)).